The sequence spans 278 residues: Undecaprenyl-diphosphatase 1 (278 aa).

6 consecutive transmembrane segments (helical) span residues 45-65, 95-115, 119-139, 191-211, 225-245, and 256-276; these read AVIGFSAVIQVGAIAAVLVYF, WWVIYATIPIVLVGLAAKPLI, LASLWVVAGSLIVGSGVMWWA, VAATRLSFFLGIPALTGAGLY, PLAVGTLVSFVVAYASIAWLL, and FVVYRIAVGVLLFGLLGTGVL.

The protein belongs to the UppP family.

Its subcellular location is the cell membrane. It carries out the reaction di-trans,octa-cis-undecaprenyl diphosphate + H2O = di-trans,octa-cis-undecaprenyl phosphate + phosphate + H(+). Its function is as follows. Catalyzes the dephosphorylation of undecaprenyl diphosphate (UPP). Confers resistance to bacitracin. The polypeptide is Undecaprenyl-diphosphatase 1 (Streptomyces coelicolor (strain ATCC BAA-471 / A3(2) / M145)).